The following is a 310-amino-acid chain: Formimidoylglutamase (310 aa).

Residues H120, D148, H150, D152, D233, and D235 each contribute to the Mn(2+) site.

Belongs to the arginase family. It depends on Mn(2+) as a cofactor.

The catalysed reaction is N-formimidoyl-L-glutamate + H2O = formamide + L-glutamate. It participates in amino-acid degradation; L-histidine degradation into L-glutamate; L-glutamate from N-formimidoyl-L-glutamate (hydrolase route): step 1/1. Functionally, catalyzes the conversion of N-formimidoyl-L-glutamate to L-glutamate and formamide. In Nocardia farcinica (strain IFM 10152), this protein is Formimidoylglutamase.